The chain runs to 93 residues: Large ribosomal subunit protein eL42 (93 aa).

4 residues coordinate Zn(2+): cysteine 11, cysteine 14, cysteine 71, and cysteine 74. The C4-type zinc-finger motif lies at 11–74 (CRYCGKHTLH…VNIRFRCTEC (64 aa)).

Belongs to the eukaryotic ribosomal protein eL42 family. As to quaternary structure, part of the 50S ribosomal subunit. Zn(2+) serves as cofactor.

In terms of biological role, binds to the 23S rRNA. The protein is Large ribosomal subunit protein eL42 of Archaeoglobus fulgidus (strain ATCC 49558 / DSM 4304 / JCM 9628 / NBRC 100126 / VC-16).